Consider the following 389-residue polypeptide: MSEYLFTSESVSEGHPDKVADQVSDAILDAILAQDPKARVAAETLVNTGLCVLAGEITTTAQVDYIKVARETIKRIGYNSSELGFDANGCAVGVYYDQQSPDIAQGVNEGEGIDLNQGAGDQGLMFGYACDETPTLMPFAIYYSHRLMQRQSELRKDGLLPWLRPDAKAQLTVVYDSESGKVKRIDTVVLSTQHDPEIGYEELKNAVIEQIIKPVLPSELLTDETKYLINPTGRFVIGGPQGDCGLTGRKIIVDTYGGAAPHGGGAFSGKDPSKVDRSAAYACRYVAKNIVAAGLATQCQIQVSYAIGVAEPTSISIDTFGTGKISEEKLITLVREHFDLRPKGIVQMLDLLRPIYSKSAAYGHFGREEPEFTWERTDKAAALRAAAGL.

His15 serves as a coordination point for ATP. Asp17 is a binding site for Mg(2+). Glu43 lines the K(+) pocket. Glu56 and Gln99 together coordinate L-methionine. The tract at residues 99–109 (QSPDIAQGVNE) is flexible loop. Residues 166–168 (DAK), 234–235 (RF), Asp243, 249–250 (RK), Ala266, and Lys270 contribute to the ATP site. Asp243 contributes to the L-methionine binding site. An L-methionine-binding site is contributed by Lys274.

It belongs to the AdoMet synthase family. In terms of assembly, homotetramer; dimer of dimers. The cofactor is Mg(2+). K(+) serves as cofactor.

It localises to the cytoplasm. The enzyme catalyses L-methionine + ATP + H2O = S-adenosyl-L-methionine + phosphate + diphosphate. Its pathway is amino-acid biosynthesis; S-adenosyl-L-methionine biosynthesis; S-adenosyl-L-methionine from L-methionine: step 1/1. Catalyzes the formation of S-adenosylmethionine (AdoMet) from methionine and ATP. The overall synthetic reaction is composed of two sequential steps, AdoMet formation and the subsequent tripolyphosphate hydrolysis which occurs prior to release of AdoMet from the enzyme. This is S-adenosylmethionine synthase from Neisseria meningitidis serogroup C / serotype 2a (strain ATCC 700532 / DSM 15464 / FAM18).